Consider the following 301-residue polypeptide: Prohibitin-2 (301 aa).

Necessary for transcriptional repression stretches follow at residues 19-49 and 150-174; these read MGTA…GHRA and ASQL…RAKD. A coiled-coil region spans residues 191 to 237; it reads REYTAAVESKQVAQQEAQRAQFLVEKAKQDQKQKIVQAEGEAAAAKM.

It belongs to the prohibitin family. The mitochondrial prohibitin complex consists of two subunits (PHB1 and PHB2), assembled into a membrane-associated ring-shaped supercomplex of approximately 1 mDa.

The protein localises to the mitochondrion inner membrane. Its subcellular location is the cytoplasm. It is found in the nucleus. It localises to the cell membrane. Protein with pleiotropic attributes mediated in a cell-compartment- and tissue-specific manner, which include the plasma membrane-associated cell signaling functions, mitochondrial chaperone, and transcriptional co-regulator of transcription factors and sex steroid hormones in the nucleus. Its function is as follows. In the mitochondria, together with PHB, forms large ring complexes (prohibitin complexes) in the inner mitochondrial membrane (IMM) and functions as a chaperone protein that stabilizes mitochondrial respiratory enzymes and maintains mitochondrial integrity in the IMM, which is required for mitochondrial morphogenesis, neuronal survival, and normal lifespan. Functionally, in the nucleus, serves as transcriptional co-regulator. The chain is Prohibitin-2 (phb2) from Xenopus tropicalis (Western clawed frog).